A 73-amino-acid polypeptide reads, in one-letter code: Methionyl-tRNA formyltransferase (73 aa).

This sequence belongs to the Fmt family.

It carries out the reaction L-methionyl-tRNA(fMet) + (6R)-10-formyltetrahydrofolate = N-formyl-L-methionyl-tRNA(fMet) + (6S)-5,6,7,8-tetrahydrofolate + H(+). Functionally, attaches a formyl group to the free amino group of methionyl-tRNA(fMet). The formyl group appears to play a dual role in the initiator identity of N-formylmethionyl-tRNA by promoting its recognition by IF2 and preventing the misappropriation of this tRNA by the elongation apparatus. The protein is Methionyl-tRNA formyltransferase (fmt) of Rickettsia rhipicephali.